The chain runs to 77 residues: Metallothionein-like protein 2 (77 aa).

The protein belongs to the metallothionein superfamily. Type 15 family.

In terms of biological role, metallothioneins have a high content of cysteine residues that bind various heavy metals. This Trifolium repens (Creeping white clover) protein is Metallothionein-like protein 2 (MT1A).